A 454-amino-acid polypeptide reads, in one-letter code: Kynurenine 3-monooxygenase (454 aa).

The protein belongs to the aromatic-ring hydroxylase family. KMO subfamily. FAD serves as cofactor.

The enzyme catalyses L-kynurenine + NADPH + O2 + H(+) = 3-hydroxy-L-kynurenine + NADP(+) + H2O. It functions in the pathway cofactor biosynthesis; NAD(+) biosynthesis; quinolinate from L-kynurenine: step 1/3. Functionally, catalyzes the hydroxylation of L-kynurenine (L-Kyn) to form 3-hydroxy-L-kynurenine (L-3OHKyn). Required for synthesis of quinolinic acid. This chain is Kynurenine 3-monooxygenase, found in Salinispora arenicola (strain CNS-205).